Reading from the N-terminus, the 423-residue chain is Keratin, type I cytoskeletal 18 (423 aa).

Ser-2 is subject to N-acetylserine. Residues 2–71 (SFTTRSTTFS…GLAGMGGIQT (70 aa)) are head. Phosphoserine is present on residues Ser-7, Ser-11, Ser-16, and Ser-19. Phosphoserine; alternate is present on residues Ser-31 and Ser-32. O-linked (GlcNAc) serine; alternate glycans are attached at residues Ser-31 and Ser-32. Ser-35 is subject to Phosphoserine. Position 37 is a phosphotyrosine (Tyr-37). Position 43 is a phosphoserine (Ser-43). Omega-N-methylarginine is present on Arg-46. Position 50 is a phosphoserine; alternate (Ser-50). An O-linked (GlcNAc) serine; alternate glycan is attached at Ser-50. At Ser-52 the chain carries Phosphoserine; by MAPKAPK2 and MAPKAPK3. Phosphoserine is present on residues Ser-57 and Ser-60. The necessary for interaction with PNN stretch occupies residues 62–366 (GLAGMGGIQT…EALLNIKVKL (305 aa)). An interaction with TRADD region spans residues 69–121 (IQTEKETMQDLNDRLASYLDKVKSLETENRRLESKIREHLEKKGPQGVRDWGH). Positions 72 to 107 (EKETMQDLNDRLASYLDKVKSLETENRRLESKIREH) are coil 1A. The IF rod domain maps to 72–384 (EKETMQDLND…RLLEDGEDFS (313 aa)). Lys-73 is covalently cross-linked (Glycyl lysine isopeptide (Lys-Gly) (interchain with G-Cter in SUMO2)). Residues Ser-85 and Ser-92 each carry the phosphoserine modification. The segment at 108–125 (LEKKGPQGVRDWGHYFKI) is linker 1. Residue Lys-124 is modified to N6-acetyllysine. The tract at residues 126–217 (IEDLRAQIFA…KNHEEEVQGL (92 aa)) is coil 1B. Phosphoserine occurs at positions 137 and 170. The segment at 218–241 (EAQIASSGLTVEVDAPKSQDLSKI) is linker 12. The tract at residues 236–384 (QDLSKIMADI…RLLEDGEDFS (149 aa)) is interaction with DNAJB6. Residue Lys-240 forms a Glycyl lysine isopeptide (Lys-Gly) (interchain with G-Cter in SUMO2) linkage. The coil 2 stretch occupies residues 242 to 380 (MADIRAQYEA…ATYRRLLEDG (139 aa)). A Phosphothreonine modification is found at Thr-295. Phosphoserine is present on Ser-316. Residues Lys-363 and Lys-365 each participate in a glycyl lysine isopeptide (Lys-Gly) (interchain with G-Cter in SUMO2) cross-link. Residues 381–423 (EDFSLNDALDSSNSMQTVQKTTTRKIVDGRVVSETNDTRVLRH) form a tail region. 4 positions are modified to phosphoserine: Ser-384, Ser-391, Ser-392, and Ser-394. Thr-397 is modified (phosphothreonine).

Belongs to the intermediate filament family. Heterotetramer of two type I and two type II keratins. KRT18 associates with KRT8. Interacts with PLEC isoform 1C, when in a heterodimer with KRT8. Interacts with PNN and mutated CFTR. Interacts with YWHAE, YWHAH and YWHAZ only when phosphorylated. Interacts with the thrombin-antithrombin complex. Interacts with DNAJB6, TCHP and TRADD. Interacts with FAM83H. Interacts with EPPK1. Interacts with PKP1 and PKP2. Post-translationally, phosphorylation increases by IL-6. Proteolytically cleaved by caspases during epithelial cell apoptosis. Cleavage occurs at Asp-231 by either caspase-3, caspas-6 or caspase-7. In terms of processing, O-GlcNAcylation increases solubility, and decreases stability by inducing proteasomal degradation. Expressed in endoderm, intestinal epithelial cells and in most extraembryonic tissues.

The protein resides in the nucleus matrix. The protein localises to the cytoplasm. It is found in the perinuclear region. Its subcellular location is the nucleus. It localises to the nucleolus. In terms of biological role, when phosphorylated, plays a role in filament reorganization. Involved in the delivery of mutated CFTR to the plasma membrane. Involved in the uptake of thrombin-antithrombin complexes by hepatic cells. Together with KRT8, is involved in interleukin-6 (IL-6)-mediated barrier protection. In Mus musculus (Mouse), this protein is Keratin, type I cytoskeletal 18 (Krt18).